The following is a 59-amino-acid chain: Conotoxin Sr5.4 (59 aa).

Residues 1-22 form the signal peptide; it reads MRCLPVFVILLLLIASAPSVDA. Positions 23 to 44 are excised as a propeptide; that stretch reads QLKTKDDVPLASFHDNAKGTQH.

The protein belongs to the conotoxin T superfamily. Contains 2 disulfide bonds that can be either 'C1-C3, C2-C4' or 'C1-C4, C2-C3', since these disulfide connectivities have been observed for conotoxins with cysteine framework V (for examples, see AC P0DQQ7 and AC P81755). As to expression, expressed by the venom duct.

The protein resides in the secreted. The chain is Conotoxin Sr5.4 from Conus spurius (Alphabet cone).